Here is a 220-residue protein sequence, read N- to C-terminus: Iron-sulfur cluster repair protein YtfE (220 aa).

It belongs to the RIC family. YtfE subfamily. In terms of assembly, homodimer.

The protein localises to the cytoplasm. Its function is as follows. Di-iron-containing protein involved in the repair of iron-sulfur clusters damaged by oxidative and nitrosative stress conditions. The chain is Iron-sulfur cluster repair protein YtfE from Shigella boydii serotype 18 (strain CDC 3083-94 / BS512).